The sequence spans 89 residues: Cornifin-B (89 aa).

The disordered stretch occupies residues 1–29 (MSSQQQKQPCTPPPQLQQQQVKQPCQPPP). 8 consecutive repeat copies span residues 3-14 (SQQQKQPCTPPP), 18-29 (QQQVKQPCQPPP), 31-38 (EPCIPKTK), 39-46 (EPCHPKVP), 47-54 (EPCHPKVP), 55-62 (EPCQPKVP), 63-70 (EPCHPKVP), and 71-78 (EPCPSIVT). The 2 X 12 AA approximate repeats stretch occupies residues 3–29 (SQQQKQPCTPPPQLQQQQVKQPCQPPP). The segment at 31–78 (EPCIPKTKEPCHPKVPEPCHPKVPEPCQPKVPEPCHPKVPEPCPSIVT) is 6 X 8 AA approximate tandem repeats.

It belongs to the cornifin (SPRR) family. The N-terminus is blocked. As to expression, suprabasal layers of squamous-differentiated tissues such as epidermis, esophagus, tongue and trachea.

Its subcellular location is the cytoplasm. Its function is as follows. Cross-linked envelope protein of keratinocytes. It is a keratinocyte protein that first appears in the cell cytosol, but ultimately becomes cross-linked to membrane proteins by transglutaminase. All that results in the formation of an insoluble envelope beneath the plasma membrane. Can function as both amine donor and acceptor in transglutaminase-mediated cross-linkage. In Homo sapiens (Human), this protein is Cornifin-B (SPRR1B).